We begin with the raw amino-acid sequence, 74 residues long: DNA-directed RNA polymerase subunit omega (74 aa).

Belongs to the RNA polymerase subunit omega family. As to quaternary structure, the RNAP catalytic core consists of 2 alpha, 1 beta/beta' and 1 omega subunit. When a sigma factor is associated with the core the holoenzyme is formed, which can initiate transcription.

The enzyme catalyses RNA(n) + a ribonucleoside 5'-triphosphate = RNA(n+1) + diphosphate. Functionally, promotes RNA polymerase assembly. Latches the N- and C-terminal regions of the beta' subunit thereby facilitating its interaction with the beta and alpha subunits. The sequence is that of DNA-directed RNA polymerase subunit omega from Helicobacter hepaticus (strain ATCC 51449 / 3B1).